The primary structure comprises 420 residues: 3-phosphoshikimate 1-carboxyvinyltransferase (420 aa).

Residues K26, S27, and R31 each coordinate 3-phosphoshikimate. K26 lines the phosphoenolpyruvate pocket. Residues G97 and R125 each contribute to the phosphoenolpyruvate site. 3-phosphoshikimate contacts are provided by S170, S171, Q172, D297, N320, and K324. Q172 lines the phosphoenolpyruvate pocket. D297 (proton acceptor) is an active-site residue. Positions 328, 375, and 400 each coordinate phosphoenolpyruvate.

Belongs to the EPSP synthase family. Monomer.

It localises to the cytoplasm. The enzyme catalyses 3-phosphoshikimate + phosphoenolpyruvate = 5-O-(1-carboxyvinyl)-3-phosphoshikimate + phosphate. It functions in the pathway metabolic intermediate biosynthesis; chorismate biosynthesis; chorismate from D-erythrose 4-phosphate and phosphoenolpyruvate: step 6/7. Its function is as follows. Catalyzes the transfer of the enolpyruvyl moiety of phosphoenolpyruvate (PEP) to the 5-hydroxyl of shikimate-3-phosphate (S3P) to produce enolpyruvyl shikimate-3-phosphate and inorganic phosphate. This Rhizobium leguminosarum bv. trifolii (strain WSM2304) protein is 3-phosphoshikimate 1-carboxyvinyltransferase.